The chain runs to 828 residues: Chitin synthase 7 (828 aa).

Transmembrane regions (helical) follow at residues 17 to 37, 57 to 77, 95 to 115, 444 to 464, 473 to 493, and 501 to 521; these read VIVG…VAAF, AVVV…IMVV, VGLQ…PWLF, FMQN…LAIL, LPVG…IYFG, and IWLY…YMVY. N-linked (GlcNAc...) asparagine glycosylation is present at Asn615. Low complexity-rich tracts occupy residues 740-752 and 813-822; these read SLVS…SNSN and SNNDPNNSNS. Disordered regions lie at residues 740-780 and 793-828; these read SLVS…LGRA and LEIG…HQQR. Asn818 carries N-linked (GlcNAc...) asparagine glycosylation.

Belongs to the chitin synthase family. Class VII subfamily.

It is found in the membrane. It catalyses the reaction [(1-&gt;4)-N-acetyl-beta-D-glucosaminyl](n) + UDP-N-acetyl-alpha-D-glucosamine = [(1-&gt;4)-N-acetyl-beta-D-glucosaminyl](n+1) + UDP + H(+). Polymerizes chitin, a structural polymer of the cell wall and septum, by transferring the sugar moiety of UDP-GlcNAc to the non-reducing end of the growing chitin polymer. Required for normal appressorial chitin content and for the normal formation and function of these infection structures. The sequence is that of Chitin synthase 7 from Pyricularia oryzae (strain 70-15 / ATCC MYA-4617 / FGSC 8958) (Rice blast fungus).